A 193-amino-acid polypeptide reads, in one-letter code: Xanthine phosphoribosyltransferase (193 aa).

Leucine 20 and asparagine 27 together coordinate xanthine. 128–132 (ANGDA) serves as a coordination point for 5-phospho-alpha-D-ribose 1-diphosphate. Residue lysine 156 coordinates xanthine.

This sequence belongs to the purine/pyrimidine phosphoribosyltransferase family. Xpt subfamily. Homodimer.

It is found in the cytoplasm. The enzyme catalyses XMP + diphosphate = xanthine + 5-phospho-alpha-D-ribose 1-diphosphate. Its pathway is purine metabolism; XMP biosynthesis via salvage pathway; XMP from xanthine: step 1/1. Its function is as follows. Converts the preformed base xanthine, a product of nucleic acid breakdown, to xanthosine 5'-monophosphate (XMP), so it can be reused for RNA or DNA synthesis. This is Xanthine phosphoribosyltransferase from Staphylococcus haemolyticus (strain JCSC1435).